A 328-amino-acid polypeptide reads, in one-letter code: GTP 3',8-cyclase (328 aa).

One can recognise a Radical SAM core domain in the interval 1–229 (MNTVDYLRIS…ESFVPGNGPA (229 aa)). R8 contributes to the GTP binding site. [4Fe-4S] cluster-binding residues include C15 and C19. Y21 contacts S-adenosyl-L-methionine. C22 is a binding site for [4Fe-4S] cluster. A GTP-binding site is contributed by R60. G64 provides a ligand contact to S-adenosyl-L-methionine. Residue T91 participates in GTP binding. S115 contributes to the S-adenosyl-L-methionine binding site. A GTP-binding site is contributed by K155. Residue M189 participates in S-adenosyl-L-methionine binding. [4Fe-4S] cluster is bound by residues C252 and C255. 257–259 (RMR) lines the GTP pocket. Residue C269 participates in [4Fe-4S] cluster binding.

The protein belongs to the radical SAM superfamily. MoaA family. In terms of assembly, monomer and homodimer. Requires [4Fe-4S] cluster as cofactor.

The enzyme catalyses GTP + AH2 + S-adenosyl-L-methionine = (8S)-3',8-cyclo-7,8-dihydroguanosine 5'-triphosphate + 5'-deoxyadenosine + L-methionine + A + H(+). It participates in cofactor biosynthesis; molybdopterin biosynthesis. Its function is as follows. Catalyzes the cyclization of GTP to (8S)-3',8-cyclo-7,8-dihydroguanosine 5'-triphosphate. The sequence is that of GTP 3',8-cyclase from Trichodesmium erythraeum (strain IMS101).